The sequence spans 811 residues: Lon protease 1 (811 aa).

The region spanning 15–212 (LPVLSLRDTV…SLALHLYRQI (198 aa)) is the Lon N-terminal domain. 376-383 (GPPGTGKT) lines the ATP pocket. Positions 613-794 (YDQPGVATGM…DEALARCLRL (182 aa)) constitute a Lon proteolytic domain. Catalysis depends on residues serine 700 and lysine 743.

It belongs to the peptidase S16 family. Homohexamer. Organized in a ring with a central cavity.

The protein resides in the cytoplasm. It catalyses the reaction Hydrolysis of proteins in presence of ATP.. Its function is as follows. ATP-dependent serine protease that mediates the selective degradation of mutant and abnormal proteins as well as certain short-lived regulatory proteins. Required for cellular homeostasis and for survival from DNA damage and developmental changes induced by stress. Degrades polypeptides processively to yield small peptide fragments that are 5 to 10 amino acids long. Binds to DNA in a double-stranded, site-specific manner. This chain is Lon protease 1, found in Sorangium cellulosum (strain So ce56) (Polyangium cellulosum (strain So ce56)).